The primary structure comprises 371 residues: Maltose/maltodextrin import ATP-binding protein MalK (371 aa).

The ABC transporter domain maps to Val-4–Ile-234. Residue Gly-36 to Ser-43 participates in ATP binding.

Belongs to the ABC transporter superfamily. Maltooligosaccharide importer (TC 3.A.1.1.1) family. The complex is composed of two ATP-binding proteins (MalK), two transmembrane proteins (MalG and MalK) and a solute-binding protein (MalE).

Its subcellular location is the cell inner membrane. The catalysed reaction is D-maltose(out) + ATP + H2O = D-maltose(in) + ADP + phosphate + H(+). In terms of biological role, part of the ABC transporter complex MalEFGK involved in maltose/maltodextrin import. Responsible for energy coupling to the transport system. The polypeptide is Maltose/maltodextrin import ATP-binding protein MalK (Vibrio vulnificus (strain CMCP6)).